A 271-amino-acid polypeptide reads, in one-letter code: ATP synthase subunit a (271 aa).

Helical transmembrane passes span 40–60, 100–120, 146–166, 220–240, and 242–262; these read TINI…LVLF, LIAP…LMDL, DVNV…FYSI, LIFI…LNVP, and AIFH…LTIV.

This sequence belongs to the ATPase A chain family. F-type ATPases have 2 components, CF(1) - the catalytic core - and CF(0) - the membrane proton channel. CF(1) has five subunits: alpha(3), beta(3), gamma(1), delta(1), epsilon(1). CF(0) has three main subunits: a(1), b(2) and c(9-12). The alpha and beta chains form an alternating ring which encloses part of the gamma chain. CF(1) is attached to CF(0) by a central stalk formed by the gamma and epsilon chains, while a peripheral stalk is formed by the delta and b chains.

The protein localises to the cell inner membrane. Functionally, key component of the proton channel; it plays a direct role in the translocation of protons across the membrane. The polypeptide is ATP synthase subunit a (Shigella dysenteriae serotype 1 (strain Sd197)).